Consider the following 83-residue polypeptide: Short neurotoxin 1 (83 aa).

A signal peptide spans 1-21 (MKTLLLTLVVVTIVCLDLGYT). Intrachain disulfides connect Cys24-Cys45, Cys38-Cys62, Cys64-Cys75, and Cys76-Cys81.

This sequence belongs to the three-finger toxin family. Short-chain subfamily. Type I alpha-neurotoxin sub-subfamily. As to expression, expressed by the venom gland.

The protein localises to the secreted. In terms of biological role, binds to muscle nicotinic acetylcholine receptor (nAChR) and inhibit acetylcholine from binding to the receptor, thereby impairing neuromuscular transmission. The protein is Short neurotoxin 1 of Oxyuranus scutellatus scutellatus (Australian taipan).